A 555-amino-acid chain; its full sequence is Ribonuclease J2 (555 aa).

Zn(2+)-binding residues include His74, His76, His142, and Asp164. His364–His368 lines the substrate pocket.

The protein belongs to the metallo-beta-lactamase superfamily. RNA-metabolizing metallo-beta-lactamase-like family. Bacterial RNase J subfamily. As to quaternary structure, unclear whether it forms homodimers or belongs to a larger complex. According to probably does not form homodimers, while shows homodimer formation. Both reports show RNase J1 and J2 interaction, probably as a heterotetramer shows it is a component of a possible RNA degradosome complex composed of rny, rnjA, rnjB, pnp, pfkA and eno, while finds no evidence of an RNA degradosome complex. Zn(2+) is required as a cofactor.

It is found in the cytoplasm. In terms of biological role, endonucleolytically cleaves the 5'-leader sequence of certain mRNAs. Endonuclease digestion by the RNase J1/J2 complex occurs at a different site and in some cases more efficiently than J1 or J2 alone. The exonuclease activity of the J1/J2 complex is highly processive on substrates longer than 5 nucleotides, on shorter substrates is distributive. Plays a role in mRNA maturation and stability. Appears to have a limited effect on 16S rRNA maturation, despite its similarity to RNase J1. This subunit alone has very poor 5'-3' exonuclease activity. The polypeptide is Ribonuclease J2 (Bacillus subtilis (strain 168)).